Reading from the N-terminus, the 297-residue chain is Dehydrodolichyl diphosphate synthase complex subunit Nus1 (297 aa).

A run of 2 helical transmembrane segments spans residues Leu-7–Leu-26 and Cys-40–Leu-56. Residues Gly-63 to His-73 show a composition bias toward basic residues. Residues Gly-63–His-86 are disordered. Residues Ile-121–Tyr-139 traverse the membrane as a helical segment. Residues Asn-148 and Asn-275 are each glycosylated (N-linked (GlcNAc...) asparagine). The short motif at Arg-294 to Gly-296 is the RXG motif; crucial for prenyltransferase activity element. Residues Leu-295 and Gly-296 each contribute to the isopentenyl diphosphate site.

This sequence belongs to the UPP synthase family. In terms of assembly, the active dehydrodolichyl diphosphate synthase complex is a heterotetramer composed of a dimer of heterodimer of DHDDS and NUS1. Interacts with NPC2. The cofactor is Mg(2+). In terms of tissue distribution, highly expressed in heart, liver, kidney and pancreas.

The protein localises to the endoplasmic reticulum membrane. It catalyses the reaction n isopentenyl diphosphate + (2E,6E)-farnesyl diphosphate = a di-trans,poly-cis-polyprenyl diphosphate + n diphosphate. It functions in the pathway protein modification; protein glycosylation. Its pathway is lipid metabolism. In terms of biological role, with DHDDS, forms the dehydrodolichyl diphosphate synthase (DDS) complex, an essential component of the dolichol monophosphate (Dol-P) biosynthetic machinery. Both subunits contribute to enzymatic activity, i.e. condensation of multiple copies of isopentenyl pyrophosphate (IPP) to farnesyl pyrophosphate (FPP) to produce dehydrodolichyl diphosphate (Dedol-PP), a precursor of dolichol phosphate which is utilized as a sugar carrier in protein glycosylation in the endoplasmic reticulum (ER). Synthesizes long-chain polyprenols, mostly of C95 and C100 chain length. Regulates the glycosylation and stability of nascent NPC2, thereby promoting trafficking of LDL-derived cholesterol. Acts as a specific receptor for the N-terminus of Nogo-B, a neural and cardiovascular regulator. This chain is Dehydrodolichyl diphosphate synthase complex subunit Nus1, found in Mus musculus (Mouse).